A 120-amino-acid chain; its full sequence is HTH-type transcriptional regulator NmtR (120 aa).

Positions 15–109 (LDSQAAAQVA…EAIYHSEHLH (95 aa)) constitute an HTH arsR-type domain. The segment at residues 49 to 72 (VTDLAEAIGMEQSAVSHQLRVLRN) is a DNA-binding region (H-T-H motif). Ni(2+) contacts are provided by aspartate 91, histidine 93, histidine 104, and histidine 107.

As to quaternary structure, homodimer.

Its activity is regulated as follows. Binding to DNA is inhibited by nickel and, to some extent, cobalt ions. Functionally, represses transcription of ctpJ/nmtA, by binding to its promoter region. This Mycobacterium tuberculosis (strain ATCC 25618 / H37Rv) protein is HTH-type transcriptional regulator NmtR (nmtR).